Consider the following 422-residue polypeptide: Receptor homology region, transmembrane domain- and RING domain-containing protein 3 (422 aa).

The signal sequence occupies residues 1-22 (MNLVVLLILTLLLFIVSYVVDA). The Lumenal portion of the chain corresponds to 23–168 (GQVILVDSNI…NTEDSVWSLY (146 aa)). N-linked (GlcNAc...) asparagine glycosylation occurs at Asn-31. Cysteines 64 and 89 form a disulfide. Residues 81-146 (LVLIIRGGCS…RAGEMLKKYA (66 aa)) form the PA domain. A helical membrane pass occupies residues 169–189 (ASIALILSLAIFCVMVTCVFF). Residues 190–422 (YRYCSTIRNS…HFASAHSLPD (233 aa)) are Cytoplasmic-facing. Residues 232-274 (CAICLEDYIVGDKLRVLPCSHKFHVACVDSWLISWRTFCPVCK) form an RING-type; atypical zinc finger. The disordered stretch occupies residues 344 to 368 (LRRQASPLQSSSQRSHLSMKSSHSL). Residues 349-368 (SPLQSSSQRSHLSMKSSHSL) show a composition bias toward polar residues.

The protein localises to the prevacuolar compartment membrane. It is found in the protein storage vacuole membrane. In terms of biological role, involved in the trafficking of vacuolar proteins. May function as a sorting receptor for protein trafficking to the protein storage vacuole (PSV). The chain is Receptor homology region, transmembrane domain- and RING domain-containing protein 3 (RMR3) from Arabidopsis thaliana (Mouse-ear cress).